We begin with the raw amino-acid sequence, 621 residues long: DNA-directed RNA polymerase subunit gamma (621 aa).

The Mg(2+) site is built by Asp463, Asp465, and Asp467.

The protein belongs to the RNA polymerase beta' chain family. RpoC1 subfamily. In terms of assembly, in cyanobacteria the RNAP catalytic core is composed of 2 alpha, 1 beta, 1 beta', 1 gamma and 1 omega subunit. When a sigma factor is associated with the core the holoenzyme is formed, which can initiate transcription. Requires Mg(2+) as cofactor.

The enzyme catalyses RNA(n) + a ribonucleoside 5'-triphosphate = RNA(n+1) + diphosphate. Its function is as follows. DNA-dependent RNA polymerase catalyzes the transcription of DNA into RNA using the four ribonucleoside triphosphates as substrates. The polypeptide is DNA-directed RNA polymerase subunit gamma (Nostoc commune).